The primary structure comprises 117 residues: Large ribosomal subunit protein uL24 (117 aa).

Belongs to the universal ribosomal protein uL24 family. Part of the 50S ribosomal subunit.

Its function is as follows. One of two assembly initiator proteins, it binds directly to the 5'-end of the 23S rRNA, where it nucleates assembly of the 50S subunit. In terms of biological role, located at the polypeptide exit tunnel on the outside of the subunit. The protein is Large ribosomal subunit protein uL24 of Methanothermobacter thermautotrophicus (strain ATCC 29096 / DSM 1053 / JCM 10044 / NBRC 100330 / Delta H) (Methanobacterium thermoautotrophicum).